The chain runs to 392 residues: MTSVQPVPRLVEQFERGLDAPICLTWELTYACNLACVHCLSSSGKRDPRELSTQQCKDIIDELERMQVFYVNIGGGEPTVRSDFWELVDYATAHHVGVKFSTNGVRITPEVAAKLAASDYVDVQISLDGANAEVNDAVRGKGSFDMAVRALENLSNAGFTDAKISVVVTRQNVDQLDEFAALAARYGATLRITRLRPSGRGADVWDDLHPTAEQQRQLYDWLVAKGDRVLTGDSFFHLSGLGAPGALAGLNLCGAGRVVCLIDPVGDVYACPFAIHDKFLAGNILSDGGFQNVWQHSELFRELREPQSAGACASCGHFDACRGGCMAAKFFTGLPLDGPDPECVEGWGAPALEKERVKPKPSGDHSRGTKQGPVALKLLTKPPARFCNESPV.

The Radical SAM core domain occupies 18–228; that stretch reads LDAPICLTWE…YDWLVAKGDR (211 aa). Positions 32, 36, 39, 253, 260, 271, 312, 315, 321, 325, and 343 each coordinate [4Fe-4S] cluster. The segment covering 354–367 has biased composition (basic and acidic residues); the sequence is KERVKPKPSGDHSR. Residues 354 to 377 are disordered; the sequence is KERVKPKPSGDHSRGTKQGPVALK.

The protein belongs to the radical SAM superfamily. MftC family. It depends on [4Fe-4S] cluster as a cofactor.

It carries out the reaction [mycofactocin precursor peptide]-C-terminal glycyl-L-valyl-L-tyrosine + S-adenosyl-L-methionine = [mycofactocin precursor peptide]-C-terminal glycyl-N-{[2-(4-hydroxyphenyl)ethenyl]-3-methylbutanamide} + 5'-deoxyadenosine + L-methionine + CO2. The enzyme catalyses [mycofactocin precursor peptide]-C-terminal glycyl-N-{[2-(4-hydroxyphenyl)ethenyl]-3-methylbutanamide} + AH2 + S-adenosyl-L-methionine = [mycofactocin precursor peptide]-C-terminal glycyl-N-{5-[(4-hydroxyphenyl)methyl]-4,4-dimethyl-2-oxopyrrolidin-3-yl}acetamide + 5'-deoxyadenosine + L-methionine + A + H(+). In terms of biological role, radical S-adenosylmethionine (SAM) enzyme responsible for the first step of the biosynthesis of the enzyme cofactor mycofactocin (MFT). Catalyzes two reactions at the C-terminus of the mycofactocin precursor (the MftA peptide). The first one is the oxidative decarboxylation of the C-terminal L-tyrosine of MftA, forming an unsaturated tyramine moiety. The second reaction is the cross-linking of the tyramine with the penultimate L-valine residue, forming a five-membered lactam ring. Its activity requires the presence of the MftB chaperone. Is required for the in vivo ethanol assimilation in M.smegmatis. This Mycolicibacterium smegmatis (strain ATCC 700084 / mc(2)155) (Mycobacterium smegmatis) protein is Mycofactocin maturase MftC.